The following is a 491-amino-acid chain: Glutamyl-tRNA(Gln) amidotransferase subunit A (491 aa).

Active-site charge relay system residues include Lys-79 and Ser-158. Ser-182 (acyl-ester intermediate) is an active-site residue.

It belongs to the amidase family. GatA subfamily. In terms of assembly, heterotrimer of A, B and C subunits.

It catalyses the reaction L-glutamyl-tRNA(Gln) + L-glutamine + ATP + H2O = L-glutaminyl-tRNA(Gln) + L-glutamate + ADP + phosphate + H(+). Allows the formation of correctly charged Gln-tRNA(Gln) through the transamidation of misacylated Glu-tRNA(Gln) in organisms which lack glutaminyl-tRNA synthetase. The reaction takes place in the presence of glutamine and ATP through an activated gamma-phospho-Glu-tRNA(Gln). In Maricaulis maris (strain MCS10) (Caulobacter maris), this protein is Glutamyl-tRNA(Gln) amidotransferase subunit A.